Here is a 1094-residue protein sequence, read N- to C-terminus: Potassium-transporting ATPase alpha chain 2 (1094 aa).

Residues 1-21 show a composition bias toward basic and acidic residues; that stretch reads MAGGAHRADRATGEERKEGGG. The interval 1 to 37 is disordered; it reads MAGGAHRADRATGEERKEGGGRWRAPHSPSPPGPRGC. A compositionally biased stretch (pro residues) spans 28 to 37; sequence SPSPPGPRGC. At 56 to 157 the chain is on the cytoplasmic side; it reads RYCTLLLFQR…NALTPPKQTP (102 aa). Residues 158–178 traverse the membrane as a helical segment; the sequence is EIIKFLKQMVGGFSILLWVGA. At 179–201 the chain is on the lumenal side; that stretch reads VLCWIAFGIQYVSNPSASLDRVY. Residues 202 to 222 traverse the membrane as a helical segment; the sequence is LGTVLAVVVILTGIFAYYQEA. Topologically, residues 223–358 are cytoplasmic; sequence KSTNIMASFC…NEKTPIAIEI (136 aa). The tract at residues 286 to 305 is disordered; the sequence is SSLTGESEPQSRSSGFTHEN. A helical membrane pass occupies residues 359–378; that stretch reads EHFVHIVAGVAVSVGILFFI. Residues 379-390 are Lumenal-facing; sequence IAVCMKYHVLDA. Residues 391–408 traverse the membrane as a helical segment; sequence IIFLIAIIVANVPEGLLA. The Cytoplasmic portion of the chain corresponds to 409–842; that stretch reads TVTVALSLTA…EEGRLIFDNL (434 aa). Asp446 acts as the 4-aspartylphosphate intermediate in catalysis. Residues Asp787 and Asp791 each contribute to the Mg(2+) site. Residues 843–862 form a helical membrane-spanning segment; the sequence is KKTIAYTLTKNIAELCPFLI. At 863–872 the chain is on the lumenal side; that stretch reads YIILGLPLPI. Residues 873-893 traverse the membrane as a helical segment; that stretch reads GTITLLFIDLGTDIIPSIALA. The Cytoplasmic portion of the chain corresponds to 894 to 913; it reads YEKAESDIMNRKPRHKKKDR. Residues 914–936 traverse the membrane as a helical segment; the sequence is LVNQQLAVYSYLHIGLMQALGAF. Residues 937–988 lie on the Lumenal side of the membrane; it reads LVYFTVYAQQGFRPTSLFHLRIAWDSDHLNDLEDNYGQEWTSYQRQYLEWTG. The chain crosses the membrane as a helical span at residues 989 to 1008; it reads YTAFFVGIMVQQIADLIIRK. Topologically, residues 1009–1022 are cytoplasmic; it reads TRKNSIFKQGLFRN. Position 1013 is a phosphoserine; by PKA (Ser1013). Residues 1023 to 1041 traverse the membrane as a helical segment; the sequence is KVIWVGIASQIIVALLLSY. At 1042-1056 the chain is on the lumenal side; it reads GLGSITALNFTMLKA. The chain crosses the membrane as a helical span at residues 1057-1077; it reads QYWFVAVPHAILIWVYDEMRK. At 1078–1094 the chain is on the cytoplasmic side; sequence LFIRLYPGSWWDKNMYY.

Belongs to the cation transport ATPase (P-type) (TC 3.A.3) family. Type IIC subfamily. As to quaternary structure, the X(+)/K(+) ATPase pump is composed of a catalytic alpha subunit and an auxiliary non-catalytic beta subunit. The alpha subunit pairs with the beta subunit of gastric H(+)/K(+) ATPase ATP4B or the beta subunit of Na(+)/K(+) ATPases ATP1B1 and ATP1B3; this interaction is required for the formation of a functionally active pump and its targeting at the plasma membrane. As to expression, found in the skin, kidney, distal colon and brain. In the kidney it is found in the connecting tubule, cortical collecting duct and outer medullary collecting duct while in the brain it is specific to choroid plexus and cortex.

Its subcellular location is the apical cell membrane. It carries out the reaction K(+)(out) + ATP + H2O + H(+)(in) = K(+)(in) + ADP + phosphate + 2 H(+)(out). It catalyses the reaction K(+)(out) + Na(+)(in) + ATP + H2O = K(+)(in) + Na(+)(out) + ADP + phosphate + H(+). In terms of biological role, the catalytic subunit of a H(+)/K(+) ATPase and/or Na(+)/K(+) ATPase pump which transports K(+) ions in exchange for Na(+) and/or H(+) ions across the apical membrane of epithelial cells. Uses ATP as an energy source to pump K(+) ions into the cell while transporting Na(+) and/or H(+) ions to the extracellular compartment. Involved in the maintenance of electrolyte homeostasis through K(+) ion absorption in kidney and colon. In the airway epithelium, may play a primary role in mucus acidification regulating its viscosity and clearance. The sequence is that of Potassium-transporting ATPase alpha chain 2 (ATP12A) from Oryctolagus cuniculus (Rabbit).